A 123-amino-acid polypeptide reads, in one-letter code: Small ribosomal subunit protein uS12 (123 aa).

At Asp-89 the chain carries 3-methylthioaspartic acid.

The protein belongs to the universal ribosomal protein uS12 family. Part of the 30S ribosomal subunit. Contacts proteins S8 and S17. May interact with IF1 in the 30S initiation complex.

Functionally, with S4 and S5 plays an important role in translational accuracy. Interacts with and stabilizes bases of the 16S rRNA that are involved in tRNA selection in the A site and with the mRNA backbone. Located at the interface of the 30S and 50S subunits, it traverses the body of the 30S subunit contacting proteins on the other side and probably holding the rRNA structure together. The combined cluster of proteins S8, S12 and S17 appears to hold together the shoulder and platform of the 30S subunit. The polypeptide is Small ribosomal subunit protein uS12 (Gluconacetobacter diazotrophicus (strain ATCC 49037 / DSM 5601 / CCUG 37298 / CIP 103539 / LMG 7603 / PAl5)).